The primary structure comprises 180 residues: Non-specific lipid transfer protein GPI-anchored 3 (180 aa).

A signal peptide spans 1–22 (MEAVRFAVAVVLVFCYVTSSNA). 4 disulfide bridges follow: Cys41/Cys78, Cys48/Cys62, Cys63/Cys104, and Cys76/Cys113. Asn91 and Asn120 each carry an N-linked (GlcNAc...) asparagine glycan. Composition is skewed to low complexity over residues 116-125 (SAGTNSSSTP) and 133-156 (PASSTSTGTGSGSTGNAAPSTAKP). The disordered stretch occupies residues 116–156 (SAGTNSSSTPPATPKTPPASSTSTGTGSGSTGNAAPSTAKP). Ser158 is lipidated: GPI-anchor amidated serine. A propeptide spans 159 to 180 (SAPAINFGGLSFASAVVATLFF) (removed in mature form).

This sequence belongs to the plant LTP family. Restricted to stamen, pollen and sporophytic tissues. Also detected, at low levels, in stems and leaves.

It is found in the cell membrane. Functionally, lipid transfer protein involved in seed and ovule maturation and development, probably by regulating the fatty acids homeostasis during suberin and sporopollenin biosynthesis or deposition. The protein is Non-specific lipid transfer protein GPI-anchored 3 of Arabidopsis thaliana (Mouse-ear cress).